We begin with the raw amino-acid sequence, 294 residues long: Ribosomal protein L11 methyltransferase (294 aa).

S-adenosyl-L-methionine-binding residues include Thr145, Gly166, Asp188, and Asn227.

It belongs to the methyltransferase superfamily. PrmA family.

The protein localises to the cytoplasm. It carries out the reaction L-lysyl-[protein] + 3 S-adenosyl-L-methionine = N(6),N(6),N(6)-trimethyl-L-lysyl-[protein] + 3 S-adenosyl-L-homocysteine + 3 H(+). Its function is as follows. Methylates ribosomal protein L11. This Hydrogenovibrio crunogenus (strain DSM 25203 / XCL-2) (Thiomicrospira crunogena) protein is Ribosomal protein L11 methyltransferase.